Consider the following 384-residue polypeptide: Cytochrome b (384 aa).

Transmembrane regions (helical) follow at residues 32–52 (FGFL…FLAI), 76–98 (WLLR…IHIS), 113–133 (TWVV…MGYV), and 179–199 (FFSF…VHMA). The heme b site is built by His-82 and His-96. Residues His-183 and His-197 each coordinate heme b. His-202 provides a ligand contact to a ubiquinone. Helical transmembrane passes span 225–245 (FIIK…LFVY), 289–309 (LGGV…PWIT), 321–341 (LYKK…WIGG), and 348–368 (YVVI…IFIP).

This sequence belongs to the cytochrome b family. The main subunits of complex b-c1 are: cytochrome b, cytochrome c1 and the Rieske protein. Heme b is required as a cofactor.

The protein resides in the mitochondrion inner membrane. Its function is as follows. Component of the ubiquinol-cytochrome c reductase complex (complex III or cytochrome b-c1 complex) that is part of the mitochondrial respiratory chain. The b-c1 complex mediates electron transfer from ubiquinol to cytochrome c. Contributes to the generation of a proton gradient across the mitochondrial membrane that is then used for ATP synthesis. The chain is Cytochrome b (MT-CYB) from Cyanidium caldarium (Red alga).